The sequence spans 734 residues: Photosystem I P700 chlorophyll a apoprotein A2 (734 aa).

Helical transmembrane passes span I46–A69, L135–Q158, L175–I199, I273–Y291, L330–Y353, A369–I395, A417–H439, and F517–V535. [4Fe-4S] cluster contacts are provided by C559 and C568. Transmembrane regions (helical) follow at residues A575–W596 and L643–I665. Residues H654, M662, and Y670 each contribute to the chlorophyll a site. Residue W671 coordinates phylloquinone. A helical membrane pass occupies residues L707–A727.

The protein belongs to the PsaA/PsaB family. In terms of assembly, the PsaA/B heterodimer binds the P700 chlorophyll special pair and subsequent electron acceptors. PSI consists of a core antenna complex that captures photons, and an electron transfer chain that converts photonic excitation into a charge separation. The eukaryotic PSI reaction center is composed of at least 11 subunits. The cofactor is P700 is a chlorophyll a/chlorophyll a' dimer, A0 is one or more chlorophyll a, A1 is one or both phylloquinones and FX is a shared 4Fe-4S iron-sulfur center..

The protein resides in the plastid. Its subcellular location is the chloroplast thylakoid membrane. It carries out the reaction reduced [plastocyanin] + hnu + oxidized [2Fe-2S]-[ferredoxin] = oxidized [plastocyanin] + reduced [2Fe-2S]-[ferredoxin]. In terms of biological role, psaA and PsaB bind P700, the primary electron donor of photosystem I (PSI), as well as the electron acceptors A0, A1 and FX. PSI is a plastocyanin-ferredoxin oxidoreductase, converting photonic excitation into a charge separation, which transfers an electron from the donor P700 chlorophyll pair to the spectroscopically characterized acceptors A0, A1, FX, FA and FB in turn. Oxidized P700 is reduced on the lumenal side of the thylakoid membrane by plastocyanin. The chain is Photosystem I P700 chlorophyll a apoprotein A2 from Jasminum nudiflorum (Winter jasmine).